Consider the following 198-residue polypeptide: Ribonuclease HII (198 aa).

An RNase H type-2 domain is found at 10–198 (QLVAGVDEVG…PVKRALGLAS (189 aa)). The a divalent metal cation site is built by aspartate 16, glutamate 17, and aspartate 108.

It belongs to the RNase HII family. The cofactor is Mn(2+). Requires Mg(2+) as cofactor.

The protein localises to the cytoplasm. It catalyses the reaction Endonucleolytic cleavage to 5'-phosphomonoester.. In terms of biological role, endonuclease that specifically degrades the RNA of RNA-DNA hybrids. The polypeptide is Ribonuclease HII (Escherichia fergusonii (strain ATCC 35469 / DSM 13698 / CCUG 18766 / IAM 14443 / JCM 21226 / LMG 7866 / NBRC 102419 / NCTC 12128 / CDC 0568-73)).